Consider the following 737-residue polypeptide: Dual specificity protein kinase KNS1 (737 aa).

Disordered stretches follow at residues 1 to 33 (MSQN…SSNK) and 270 to 290 (SSLR…NKSN). Positions 15–33 (ANMNNSTTTGPANNTSSNK) are enriched in polar residues. Residues 277-290 (SNGSSESASSNKSN) show a composition bias toward low complexity. Positions 313-720 (FVVKDLLGQG…AKDALDHEWF (408 aa)) constitute a Protein kinase domain. ATP contacts are provided by residues 319–327 (LGQGTFGKV) and Lys343. Asp440 functions as the Proton acceptor in the catalytic mechanism. Position 562 is a phosphothreonine (Thr562).

Belongs to the protein kinase superfamily. CMGC Ser/Thr protein kinase family. Lammer subfamily. Post-translationally, phosphorylated (auto-) on Ser/Thr/Tyr.

It carries out the reaction L-seryl-[protein] + ATP = O-phospho-L-seryl-[protein] + ADP + H(+). The catalysed reaction is L-threonyl-[protein] + ATP = O-phospho-L-threonyl-[protein] + ADP + H(+). It catalyses the reaction L-tyrosyl-[protein] + ATP = O-phospho-L-tyrosyl-[protein] + ADP + H(+). Functionally, nonessential protein kinase. This Saccharomyces cerevisiae (strain ATCC 204508 / S288c) (Baker's yeast) protein is Dual specificity protein kinase KNS1 (KNS1).